The primary structure comprises 721 residues: 1,4-alpha-glucan branching enzyme GlgB (721 aa).

The active-site Nucleophile is the Asp-404. The active-site Proton donor is Glu-457.

Belongs to the glycosyl hydrolase 13 family. GlgB subfamily. Monomer.

The enzyme catalyses Transfers a segment of a (1-&gt;4)-alpha-D-glucan chain to a primary hydroxy group in a similar glucan chain.. It functions in the pathway glycan biosynthesis; glycogen biosynthesis. Functionally, catalyzes the formation of the alpha-1,6-glucosidic linkages in glycogen by scission of a 1,4-alpha-linked oligosaccharide from growing alpha-1,4-glucan chains and the subsequent attachment of the oligosaccharide to the alpha-1,6 position. The polypeptide is 1,4-alpha-glucan branching enzyme GlgB (Bradyrhizobium diazoefficiens (strain JCM 10833 / BCRC 13528 / IAM 13628 / NBRC 14792 / USDA 110)).